The sequence spans 401 residues: 4-hydroxy-3-methylbut-2-en-1-yl diphosphate synthase (ferredoxin) (401 aa).

[4Fe-4S] cluster-binding residues include cysteine 306, cysteine 309, cysteine 340, and glutamate 347.

Belongs to the IspG family. It depends on [4Fe-4S] cluster as a cofactor.

The catalysed reaction is (2E)-4-hydroxy-3-methylbut-2-enyl diphosphate + 2 oxidized [2Fe-2S]-[ferredoxin] + H2O = 2-C-methyl-D-erythritol 2,4-cyclic diphosphate + 2 reduced [2Fe-2S]-[ferredoxin] + H(+). It participates in isoprenoid biosynthesis; isopentenyl diphosphate biosynthesis via DXP pathway; isopentenyl diphosphate from 1-deoxy-D-xylulose 5-phosphate: step 5/6. Functionally, converts 2C-methyl-D-erythritol 2,4-cyclodiphosphate (ME-2,4cPP) into 1-hydroxy-2-methyl-2-(E)-butenyl 4-diphosphate. The polypeptide is 4-hydroxy-3-methylbut-2-en-1-yl diphosphate synthase (ferredoxin) (Synechococcus sp. (strain CC9902)).